A 121-amino-acid chain; its full sequence is Holin-like protein CidA 1 (121 aa).

The next 4 membrane-spanning stretches (helical) occupy residues 7–24, 28–50, 62–81, and 91–113; these read SGQI…EWIA, HLPV…FNLV, LLKE…IRYR, and LILI…TELL.

Belongs to the CidA/LrgA family. CidA subfamily.

Its subcellular location is the cell membrane. Functionally, increases the activity of extracellular murein hydrolases possibly by mediating their export via hole formation. Inhibited by the antiholin-like proteins LrgAB. In an unstressed cell, the LrgAB products probably inhibit the function of the CidA protein. When a cell is stressed by the addition of antibiotics or by other factors in the environment, CidA possibly oligomerizes within the bacterial cell membrane, creating lesions that disrupt the proton motive force, which in turn results in loss of cell viability. These lesions are also hypothesized to regulate the subsequent cell lysis by either allowing the murein hydrolases access to the cell wall substrate and/or regulating their activity by a possible change in the cell wall pH that results from loss of membrane potential. The sequence is that of Holin-like protein CidA 1 (cidA1) from Bacillus cereus (strain ATCC 14579 / DSM 31 / CCUG 7414 / JCM 2152 / NBRC 15305 / NCIMB 9373 / NCTC 2599 / NRRL B-3711).